We begin with the raw amino-acid sequence, 1154 residues long: Polyketide biosynthesis protein ThaF (1154 aa).

Residues 330–714 form an acyl transferase region; that stretch reads MHAFLFPGQG…TNGIAPAARV (385 aa). Positions 627–689 are disordered; that stretch reads SAVAASAPPR…PAPAPAPAPA (63 aa). Positions 641–672 are enriched in low complexity; it reads ADAQPPAASPARAATAASTMPPASASASASAP. Positions 673–689 are enriched in pro residues; the sequence is APAPAPAPAPAPAPAPA.

The protein in the N-terminal section; belongs to the FabD family.

The protein resides in the cytoplasm. It carries out the reaction holo-[ACP] + malonyl-CoA = malonyl-[ACP] + CoA. The protein operates within antibiotic biosynthesis. Involved in production of the polyketide antibiotic thailandamide. Probably has an acyl transferase activity and could also have a flavin mononucleotide-dependent oxidoreductase activity. The sequence is that of Polyketide biosynthesis protein ThaF from Burkholderia thailandensis (strain ATCC 700388 / DSM 13276 / CCUG 48851 / CIP 106301 / E264).